Reading from the N-terminus, the 232-residue chain is 2,3-bisphosphoglycerate-dependent phosphoglycerate mutase (232 aa).

Substrate contacts are provided by residues arginine 8–asparagine 15, threonine 21–glycine 22, arginine 60, glutamate 87–tyrosine 90, lysine 98, arginine 114–arginine 115, and glycine 183–asparagine 184. The active-site Tele-phosphohistidine intermediate is histidine 9. The active-site Proton donor/acceptor is the glutamate 87.

It belongs to the phosphoglycerate mutase family. BPG-dependent PGAM subfamily.

The catalysed reaction is (2R)-2-phosphoglycerate = (2R)-3-phosphoglycerate. It participates in carbohydrate degradation; glycolysis; pyruvate from D-glyceraldehyde 3-phosphate: step 3/5. Functionally, catalyzes the interconversion of 2-phosphoglycerate and 3-phosphoglycerate. The chain is 2,3-bisphosphoglycerate-dependent phosphoglycerate mutase from Clostridium beijerinckii (strain ATCC 51743 / NCIMB 8052) (Clostridium acetobutylicum).